The following is a 170-amino-acid chain: Large ribosomal subunit protein uL10 (170 aa).

The protein belongs to the universal ribosomal protein uL10 family. As to quaternary structure, part of the ribosomal stalk of the 50S ribosomal subunit. The N-terminus interacts with L11 and the large rRNA to form the base of the stalk. The C-terminus forms an elongated spine to which L12 dimers bind in a sequential fashion forming a multimeric L10(L12)X complex.

Its function is as follows. Forms part of the ribosomal stalk, playing a central role in the interaction of the ribosome with GTP-bound translation factors. This Chlamydia felis (strain Fe/C-56) (Chlamydophila felis) protein is Large ribosomal subunit protein uL10.